Reading from the N-terminus, the 1259-residue chain is uncharacterized protein (1259 aa).

The disordered stretch occupies residues 354 to 410; the sequence is KLNQAGGKRNSSMNNSTQNNNSSRSNNSARNNNSVWNNNNSAWKNNNSAWNDNSSWK. Low complexity predominate over residues 362–410; it reads RNSSMNNSTQNNNSSRSNNSARNNNSVWNNNNSAWKNNNSAWNDNSSWK.

The protein resides in the virion. This is an uncharacterized protein from Acanthamoeba polyphaga (Amoeba).